A 539-amino-acid polypeptide reads, in one-letter code: Probable protein kinase UbiB (539 aa).

The helical transmembrane segment at 23 to 43 (DLLFALPLPWWMLAVRFVLPW) threads the bilayer. Positions 125 to 492 (RFDETPLASA…WHDRKDEPVL (368 aa)) constitute a Protein kinase domain. Residues 131 to 139 (LASASVAQV) and lysine 153 contribute to the ATP site. Aspartate 288 (proton acceptor) is an active-site residue. Transmembrane regions (helical) follow at residues 494 to 514 (LIGA…SEAA) and 517 to 537 (LLTL…YLIV).

It belongs to the ABC1 family. UbiB subfamily.

The protein localises to the cell inner membrane. The protein operates within cofactor biosynthesis; ubiquinone biosynthesis [regulation]. Is probably a protein kinase regulator of UbiI activity which is involved in aerobic coenzyme Q (ubiquinone) biosynthesis. This Pseudomonas syringae pv. tomato (strain ATCC BAA-871 / DC3000) protein is Probable protein kinase UbiB.